Reading from the N-terminus, the 439-residue chain is ATP-dependent DNA helicase dda (439 aa).

32 to 39 contacts ATP; the sequence is GPAGTGKT.

In terms of assembly, monomer. Interacts with UvsX and gene 32 protein.

It carries out the reaction Couples ATP hydrolysis with the unwinding of duplex DNA at the replication fork by translocating in the 5'-3' direction. This creates two antiparallel DNA single strands (ssDNA). The leading ssDNA polymer is the template for DNA polymerase III holoenzyme which synthesizes a continuous strand.. The catalysed reaction is ATP + H2O = ADP + phosphate + H(+). Its function is as follows. DNA helicase that stimulates viral DNA replication and recombination. Plays a role in T4 DNA replication initiation by selecting and activating DNA origins. Acts by dissociating and reassociating with the DNA molecule being unwound. Unwinds DNA as a monomer in a 5'-3' direction at a rate of 250 bp/s and can efficiently displace proteins from the DNA. This Enterobacteria phage T4 (Bacteriophage T4) protein is ATP-dependent DNA helicase dda (dda).